Consider the following 440-residue polypeptide: Protein CANDIDATE G-PROTEIN COUPLED RECEPTOR 7 (440 aa).

Residues 1–24 (MAKMPLSVVVFLLFSAAFLAVSMA) form the signal peptide. N-linked (GlcNAc...) asparagine glycosylation is found at Asn-124 and Asn-162. The next 5 membrane-spanning stretches (helical) occupy residues 175–195 (LPTLYSFFFLCYVAFLGFWSY), 207–227 (IHLLMAGLLLIKSLNLICAAE), 243–263 (ILFYIFQFIRVVLLFTVIILI), 281–301 (VLIIVIPLQVLANIASIVIGE), and 315–335 (VFLLVDIICCCAIIFPIVWSI). N-linked (GlcNAc...) asparagine glycosylation is present at Asn-351. 2 helical membrane passes run 363-383 (IVVIGYLYFTRIVVFALKTIA) and 390-410 (VSFAAEEIVSLVFYVIMFHMF).

It belongs to the LU7TM family.

The protein resides in the membrane. Plays a role in plants and microbes interactions. G-protein coupled receptor involved in root growth mediated by the bacterial quorum-sensing signals N-acyl-homoserine lactones (AHLs). The chain is Protein CANDIDATE G-PROTEIN COUPLED RECEPTOR 7 from Arabidopsis thaliana (Mouse-ear cress).